The following is a 60-amino-acid chain: Large ribosomal subunit protein uL30 (60 aa).

This sequence belongs to the universal ribosomal protein uL30 family. In terms of assembly, part of the 50S ribosomal subunit.

This chain is Large ribosomal subunit protein uL30, found in Cutibacterium acnes (strain DSM 16379 / KPA171202) (Propionibacterium acnes).